The following is a 189-amino-acid chain: NADH-quinone oxidoreductase subunit B (189 aa).

Residues Cys39, Cys40, Cys104, and Cys135 each contribute to the [4Fe-4S] cluster site.

Belongs to the complex I 20 kDa subunit family. In terms of assembly, NDH-1 is composed of 14 different subunits. Subunits NuoB, C, D, E, F, and G constitute the peripheral sector of the complex. [4Fe-4S] cluster serves as cofactor.

It is found in the cell inner membrane. The enzyme catalyses a quinone + NADH + 5 H(+)(in) = a quinol + NAD(+) + 4 H(+)(out). In terms of biological role, NDH-1 shuttles electrons from NADH, via FMN and iron-sulfur (Fe-S) centers, to quinones in the respiratory chain. The immediate electron acceptor for the enzyme in this species is believed to be a menaquinone. Couples the redox reaction to proton translocation (for every two electrons transferred, four hydrogen ions are translocated across the cytoplasmic membrane), and thus conserves the redox energy in a proton gradient. This chain is NADH-quinone oxidoreductase subunit B, found in Chlorobium luteolum (strain DSM 273 / BCRC 81028 / 2530) (Pelodictyon luteolum).